Consider the following 177-residue polypeptide: Translation initiation factor IF-3 (177 aa).

It belongs to the IF-3 family. In terms of assembly, monomer.

It localises to the cytoplasm. Its function is as follows. IF-3 binds to the 30S ribosomal subunit and shifts the equilibrium between 70S ribosomes and their 50S and 30S subunits in favor of the free subunits, thus enhancing the availability of 30S subunits on which protein synthesis initiation begins. The polypeptide is Translation initiation factor IF-3 (Nostoc sp. (strain PCC 7120 / SAG 25.82 / UTEX 2576)).